The following is a 382-amino-acid chain: UDP-N-acetylglucosamine--N-acetylmuramyl-(pentapeptide) pyrophosphoryl-undecaprenol N-acetylglucosamine transferase (382 aa).

UDP-N-acetyl-alpha-D-glucosamine is bound by residues 17–19, Asn137, Arg179, Ser213, and Gln308; that span reads TAG.

It belongs to the glycosyltransferase 28 family. MurG subfamily.

It is found in the cell membrane. It catalyses the reaction di-trans,octa-cis-undecaprenyl diphospho-N-acetyl-alpha-D-muramoyl-L-alanyl-D-glutamyl-meso-2,6-diaminopimeloyl-D-alanyl-D-alanine + UDP-N-acetyl-alpha-D-glucosamine = di-trans,octa-cis-undecaprenyl diphospho-[N-acetyl-alpha-D-glucosaminyl-(1-&gt;4)]-N-acetyl-alpha-D-muramoyl-L-alanyl-D-glutamyl-meso-2,6-diaminopimeloyl-D-alanyl-D-alanine + UDP + H(+). It participates in cell wall biogenesis; peptidoglycan biosynthesis. In terms of biological role, cell wall formation. Catalyzes the transfer of a GlcNAc subunit on undecaprenyl-pyrophosphoryl-MurNAc-pentapeptide (lipid intermediate I) to form undecaprenyl-pyrophosphoryl-MurNAc-(pentapeptide)GlcNAc (lipid intermediate II). This chain is UDP-N-acetylglucosamine--N-acetylmuramyl-(pentapeptide) pyrophosphoryl-undecaprenol N-acetylglucosamine transferase, found in Rhodococcus opacus (strain B4).